Here is a 255-residue protein sequence, read N- to C-terminus: 20 kDa chaperonin, chloroplastic (255 aa).

The N-terminal 53 residues, 1–53 (MAATHLTSTSSLTINTLPSFEGLRSASGISKINVSVAYPSFTSRSFRGLVVRA), are a transit peptide targeting the chloroplast. 2 cpn-10 domain regions span residues 54 to 156 (ASIT…ILET) and 157 to 255 (DDVK…AVLS).

It belongs to the GroES chaperonin family. As to quaternary structure, forms stable complexes with CPN60 in the presence of ATP.

The protein localises to the plastid. The protein resides in the chloroplast. Its function is as follows. Seems to function only as a co-chaperone, along with cpn60, and in certain cases is essential for the discharge of biologically active proteins from cpn60. The polypeptide is 20 kDa chaperonin, chloroplastic (CPN21) (Spinacia oleracea (Spinach)).